We begin with the raw amino-acid sequence, 286 residues long: Bifunctional protein FolD (286 aa).

NADP(+) is bound by residues 165 to 167 (GRS), S190, and V231.

The protein belongs to the tetrahydrofolate dehydrogenase/cyclohydrolase family. In terms of assembly, homodimer.

The catalysed reaction is (6R)-5,10-methylene-5,6,7,8-tetrahydrofolate + NADP(+) = (6R)-5,10-methenyltetrahydrofolate + NADPH. It catalyses the reaction (6R)-5,10-methenyltetrahydrofolate + H2O = (6R)-10-formyltetrahydrofolate + H(+). Its pathway is one-carbon metabolism; tetrahydrofolate interconversion. In terms of biological role, catalyzes the oxidation of 5,10-methylenetetrahydrofolate to 5,10-methenyltetrahydrofolate and then the hydrolysis of 5,10-methenyltetrahydrofolate to 10-formyltetrahydrofolate. This is Bifunctional protein FolD from Bacillus mycoides (strain KBAB4) (Bacillus weihenstephanensis).